The sequence spans 189 residues: FUN14 domain-containing protein 2 (189 aa).

The Cytoplasmic portion of the chain corresponds to 1–80 (METSAPRAGS…GQESGPSAEK (80 aa)). Phosphoserine is present on residues Ser-10 and Ser-53. The helical transmembrane segment at 81–101 (YSVATQLFIGGVTGWCTGFIF) threads the bilayer. The Mitochondrial intermembrane segment spans residues 102 to 107 (QNVGKL). A helical membrane pass occupies residues 108 to 128 (AATAVGGGFFLLQLANHTGYI). At 129-164 (KVDWQRVEKDMKKAKEQLKIRKSNQMPTEVRSKAEE) the chain is on the cytoplasmic side. Residue Ser-151 is modified to Phosphoserine. The chain crosses the membrane as a helical span at residues 165 to 185 (VVSFVKKNVLVTGGFFGGFLL). The Mitochondrial intermembrane segment spans residues 186–189 (GMAS).

It belongs to the FUN14 family.

It localises to the mitochondrion outer membrane. It is found in the nucleus. Functionally, binds directly and specifically 1,2-Diacyl-sn-glycero-3-phospho-(1'-myo-inositol-3',4',5'-bisphosphate) (PIP3) leading to the recruitment of PIP3 to mitochondria and may play a role in the regulation of the platelet activation via AKT/GSK3B/cGMP signaling pathways. May act as transcription factor that regulates SREBP1 (isoform SREBP-1C) expression in order to modulate triglyceride (TG) homeostasis in hepatocytes. This chain is FUN14 domain-containing protein 2, found in Macaca mulatta (Rhesus macaque).